A 429-amino-acid polypeptide reads, in one-letter code: Ribosomal RNA small subunit methyltransferase B (429 aa).

S-adenosyl-L-methionine is bound by residues 254 to 260 (CAAPGGK), Asp-277, Asp-303, and Asp-322. Residue Cys-375 is the Nucleophile of the active site.

It belongs to the class I-like SAM-binding methyltransferase superfamily. RsmB/NOP family.

It is found in the cytoplasm. It carries out the reaction cytidine(967) in 16S rRNA + S-adenosyl-L-methionine = 5-methylcytidine(967) in 16S rRNA + S-adenosyl-L-homocysteine + H(+). In terms of biological role, specifically methylates the cytosine at position 967 (m5C967) of 16S rRNA. This chain is Ribosomal RNA small subunit methyltransferase B, found in Escherichia coli O7:K1 (strain IAI39 / ExPEC).